The following is a 481-amino-acid chain: MQLLPEGQLRLCVFQPVHLTSGLLILFILKSISSLKPARLPVYQRKPFIAAWNAPTDLCLIKYNLTLNLKVFQMVGSPRLKDRGQNVVIFYANRLGYYPWYTSEGVPINGGLPQNTSLQVHLKKAAQDINYYIPSENFSGLAVIDWEYWRPQWARNWNTKDIYRQKSRTLISDMKENISAADIEYSAKATFEKSAKAFMEETIKLGSKSRPKGLWGYYLYPDCHNYNVYATNYTGSCPEEEVLRNNDLSWLWNSSTALYPAVSIRKSFADSENTLHFSRFRVRESLRISTMTSQDYALPVFVYTQLGYKEEPLLFLSKQDLISTIGESAALGAAGIVVWGDMNLTSSEENCTKVNRFVNSDFGSYIINVTRAAEVCSRHLCKNNGRCVRKTWKAAHYLHLNPASYHIEASEDGEFIVRGRASDTDLAVMAENFLCHCYEGYEGADCREMTEASGPSGLSLSSSSVITLCLLVLAGYQSIQL.

Over M1–L11 the chain is Cytoplasmic. A helical transmembrane segment spans residues C12–I32. Residues S33–P455 are Extracellular-facing. Disulfide bonds link C59-C351, C223-C237, C376-C387, C381-C435, and C437-C446. N-linked (GlcNAc...) asparagine glycans are attached at residues N64 and N115. Catalysis depends on E147, which acts as the Proton donor. N-linked (GlcNAc...) asparagine glycans are attached at residues N232 and N343. The helical transmembrane segment at S456 to Y476 threads the bilayer. Over Q477–L481 the chain is Cytoplasmic.

Belongs to the glycosyl hydrolase 56 family.

The protein localises to the membrane. The enzyme catalyses Random hydrolysis of (1-&gt;4)-linkages between N-acetyl-beta-D-glucosamine and D-glucuronate residues in hyaluronate.. Endo-hyaluronidase that degrades hyaluronan to smaller oligosaccharide fragments. Also has chondroitin sulfate hydrolase activity, The best substrate being the galactosaminidic linkage in the sequence of a trisulfated tetrasaccharide. The sequence is that of Hyaluronidase-4 (Hyal4) from Mus musculus (Mouse).